We begin with the raw amino-acid sequence, 41 residues long: Alpha-conotoxin CIB (41 aa).

A propeptide spanning residues 1 to 21 (SDGRNEAANDEASDVIELALK) is cleaved from the precursor. Cystine bridges form between C23/C29 and C24/C37. Positions 25–27 (SNP) are ser-Xaa-Pro motif, crucial for potent interaction with nAChR. Residue C37 is modified to Cysteine amide.

The protein belongs to the conotoxin A superfamily. As to expression, expressed by the venom duct.

It is found in the secreted. Functionally, alpha-conotoxins act on postsynaptic membranes, they bind to the nicotinic acetylcholine receptors (nAChR) and thus inhibit them. This toxin blocks rat neuronal nAChR alpha-3-beta-2/CHRNA3-CHRNB2 (IC(50)=128.9 nM) and alpha-7/CHRNA7 (IC(50)=1511 nM). In vivo, intramuscular injection into zebrafish does not produce any effect on the locomotion of zebrafish. The polypeptide is Alpha-conotoxin CIB (Conus catus (Cat cone)).